The primary structure comprises 61 residues: Photosystem II reaction center protein K (61 aa).

A propeptide spanning residues 1 to 24 (MLNILNLICICLNFALYSSSFFFT) is cleaved from the precursor. A helical transmembrane segment spans residues 40 to 60 (MPVIPLFFFLLAFVWQAAVSF).

This sequence belongs to the PsbK family. PSII is composed of 1 copy each of membrane proteins PsbA, PsbB, PsbC, PsbD, PsbE, PsbF, PsbH, PsbI, PsbJ, PsbK, PsbL, PsbM, PsbT, PsbX, PsbY, PsbZ, Psb30/Ycf12, at least 3 peripheral proteins of the oxygen-evolving complex and a large number of cofactors. It forms dimeric complexes.

Its subcellular location is the plastid. It is found in the chloroplast thylakoid membrane. One of the components of the core complex of photosystem II (PSII). PSII is a light-driven water:plastoquinone oxidoreductase that uses light energy to abstract electrons from H(2)O, generating O(2) and a proton gradient subsequently used for ATP formation. It consists of a core antenna complex that captures photons, and an electron transfer chain that converts photonic excitation into a charge separation. The polypeptide is Photosystem II reaction center protein K (Populus alba (White poplar)).